Here is a 217-residue protein sequence, read N- to C-terminus: Cytidylate kinase (217 aa).

9 to 17 (GPAGAGKST) lines the ATP pocket.

It belongs to the cytidylate kinase family. Type 1 subfamily.

The protein resides in the cytoplasm. It catalyses the reaction CMP + ATP = CDP + ADP. The catalysed reaction is dCMP + ATP = dCDP + ADP. The sequence is that of Cytidylate kinase from Clostridium acetobutylicum (strain ATCC 824 / DSM 792 / JCM 1419 / IAM 19013 / LMG 5710 / NBRC 13948 / NRRL B-527 / VKM B-1787 / 2291 / W).